We begin with the raw amino-acid sequence, 118 residues long: Sarafotoxin-i1 (118 aa).

The signal sequence occupies residues 1-23 (MALLPRLAAGGLLLLLALAALDG). A propeptide spanning residues 24–84 (KPAPPKLLQK…LSPLRKPQPL (61 aa)) is cleaved from the precursor. Intrachain disulfides connect Cys85–Cys99 and Cys87–Cys95. The propeptide occupies 112-118 (PSPIQSS).

It belongs to the endothelin/sarafotoxin family. In terms of processing, different length molecules ranging from 15 (85-99) to 30 amino acids (85-114) have been found in the venom. Expressed by the venom gland.

The protein localises to the secreted. In terms of biological role, vasoconstrictor activity. These toxins cause cardiac arrest probably as a result of coronary vasospasm. Sarafotoxin-i3: vasoconstrictor activity. Causes cardiac arrest probably as a result of coronary vasospasm. Displays low agonistic activities towards endothelin-2 receptor (EDNRB) (displays affinity in the micromolar range). The sequence is that of Sarafotoxin-i1 from Atractaspis irregularis (Variable burrowing asp).